We begin with the raw amino-acid sequence, 198 residues long: Potassium-transporting ATPase KdpC subunit (198 aa).

Residues 8-28 (ILAVLVFTILCGIIYPVSTTV) form a helical membrane-spanning segment.

This sequence belongs to the KdpC family. The system is composed of three essential subunits: KdpA, KdpB and KdpC.

The protein resides in the cell membrane. Functionally, part of the high-affinity ATP-driven potassium transport (or Kdp) system, which catalyzes the hydrolysis of ATP coupled with the electrogenic transport of potassium into the cytoplasm. This subunit acts as a catalytic chaperone that increases the ATP-binding affinity of the ATP-hydrolyzing subunit KdpB by the formation of a transient KdpB/KdpC/ATP ternary complex. This chain is Potassium-transporting ATPase KdpC subunit, found in Clostridium perfringens (strain ATCC 13124 / DSM 756 / JCM 1290 / NCIMB 6125 / NCTC 8237 / Type A).